Consider the following 193-residue polypeptide: NADH-quinone oxidoreductase subunit B (193 aa).

[4Fe-4S] cluster is bound by residues Cys72, Cys73, Cys137, and Cys167.

The protein belongs to the complex I 20 kDa subunit family. In terms of assembly, NDH-1 is composed of 14 different subunits. Subunits NuoB, C, D, E, F, and G constitute the peripheral sector of the complex. [4Fe-4S] cluster is required as a cofactor.

Its subcellular location is the cell inner membrane. It catalyses the reaction a quinone + NADH + 5 H(+)(in) = a quinol + NAD(+) + 4 H(+)(out). NDH-1 shuttles electrons from NADH, via FMN and iron-sulfur (Fe-S) centers, to quinones in the respiratory chain. The immediate electron acceptor for the enzyme in this species is believed to be ubiquinone. Couples the redox reaction to proton translocation (for every two electrons transferred, four hydrogen ions are translocated across the cytoplasmic membrane), and thus conserves the redox energy in a proton gradient. This Bartonella quintana (strain Toulouse) (Rochalimaea quintana) protein is NADH-quinone oxidoreductase subunit B.